The following is a 118-amino-acid chain: UPF0148 protein M1627_1409 (118 aa).

It belongs to the UPF0148 family.

The polypeptide is UPF0148 protein M1627_1409 (Saccharolobus islandicus (strain M.16.27) (Sulfolobus islandicus)).